The sequence spans 144 residues: Large ribosomal subunit protein uL15 (144 aa).

The segment at 1–49 is disordered; that stretch reads MRLNTLSPAAGAKSAAKRVGRGIGSGLGKTAGRGHKGQKSRSGGGVRVG. Residues 21–31 show a composition bias toward gly residues; the sequence is RGIGSGLGKTA.

The protein belongs to the universal ribosomal protein uL15 family. Part of the 50S ribosomal subunit.

Its function is as follows. Binds to the 23S rRNA. The chain is Large ribosomal subunit protein uL15 from Shewanella piezotolerans (strain WP3 / JCM 13877).